We begin with the raw amino-acid sequence, 1354 residues long: Ubiquitin carboxyl-terminal hydrolase 47 (1354 aa).

Residues 114 to 133 (EQPQLASDESGTADSSGLDD) are compositionally biased toward polar residues. Positions 114-139 (EQPQLASDESGTADSSGLDDSTQEKF) are disordered. The region spanning 174–549 (VGLVNQAMTC…NAYMLMYRLK (376 aa)) is the USP domain. Cys-183 serves as the catalytic Nucleophile. The interval 408-438 (DVEDEKSPQTDSCTDSGAENEGSCHSDQMSN) is disordered. A compositionally biased stretch (polar residues) spans 416 to 438 (QTDSCTDSGAENEGSCHSDQMSN). His-488 functions as the Proton acceptor in the catalytic mechanism. A compositionally biased stretch (polar residues) spans 863-882 (LSLQQHQDGGNGDSSKSTEG). Disordered regions lie at residues 863-1004 (LSLQ…ESGK) and 1314-1335 (LAKK…SPRK). Over residues 920 to 930 (PEERSDSDVNN) the composition is skewed to basic and acidic residues. Residues 933-949 (STSSVDSDILSSSHSSD) show a composition bias toward low complexity. Over residues 977 to 986 (KANDGKKETW) the composition is skewed to basic and acidic residues. The span at 987 to 1000 (DTAEEDSGTDSEYD) shows a compositional bias: acidic residues.

It belongs to the peptidase C19 family. USP47 subfamily.

Its subcellular location is the cytoplasm. The catalysed reaction is Thiol-dependent hydrolysis of ester, thioester, amide, peptide and isopeptide bonds formed by the C-terminal Gly of ubiquitin (a 76-residue protein attached to proteins as an intracellular targeting signal).. Functionally, ubiquitin-specific protease that specifically deubiquitinates monoubiquitinated DNA polymerase beta (polb), stabilizing polb thereby playing a role in base-excision repair (BER). The protein is Ubiquitin carboxyl-terminal hydrolase 47 (usp47) of Xenopus tropicalis (Western clawed frog).